The following is a 307-amino-acid chain: Aspartate carbamoyltransferase catalytic subunit (307 aa).

Residues R55 and T56 each contribute to the carbamoyl phosphate site. K85 serves as a coordination point for L-aspartate. Carbamoyl phosphate contacts are provided by R106, H134, and Q137. R167 and R228 together coordinate L-aspartate. Residues L266 and P267 each contribute to the carbamoyl phosphate site.

It belongs to the aspartate/ornithine carbamoyltransferase superfamily. ATCase family. In terms of assembly, heterododecamer (2C3:3R2) of six catalytic PyrB chains organized as two trimers (C3), and six regulatory PyrI chains organized as three dimers (R2).

The enzyme catalyses carbamoyl phosphate + L-aspartate = N-carbamoyl-L-aspartate + phosphate + H(+). Its pathway is pyrimidine metabolism; UMP biosynthesis via de novo pathway; (S)-dihydroorotate from bicarbonate: step 2/3. In terms of biological role, catalyzes the condensation of carbamoyl phosphate and aspartate to form carbamoyl aspartate and inorganic phosphate, the committed step in the de novo pyrimidine nucleotide biosynthesis pathway. The polypeptide is Aspartate carbamoyltransferase catalytic subunit (Tolumonas auensis (strain DSM 9187 / NBRC 110442 / TA 4)).